A 567-amino-acid polypeptide reads, in one-letter code: Sensor histidine kinase MtrB (567 aa).

Over residues methionine 1–arginine 15 the composition is skewed to basic residues. Residues methionine 1–threonine 20 are disordered. 2 consecutive transmembrane segments (helical) span residues valine 42–threonine 62 and glycine 213–valine 233. The HAMP domain occupies arginine 235 to alanine 287. One can recognise a Histidine kinase domain in the interval aspartate 302 to arginine 519. Histidine 305 is modified (phosphohistidine; by autocatalysis). Residues proline 529 to proline 551 show a composition bias toward pro residues. The tract at residues proline 529–glycine 567 is disordered. The segment covering glutamate 552 to glycine 567 has biased composition (basic and acidic residues).

In terms of assembly, interacts with MrtA. Interacts with LpqB, probably extracytoplasmically via MtrB's sensor domain. Mg(2+) serves as cofactor. Requires Ca(2+) as cofactor. In terms of processing, the C-terminal domain (residues 234-567) autophosphorylates.

The protein resides in the cell membrane. The catalysed reaction is ATP + protein L-histidine = ADP + protein N-phospho-L-histidine.. Its activity is regulated as follows. Ca(2+) ions inhibit the phosphotransfer from MtrB to MtrA. In terms of biological role, member of the two-component regulatory system MtrA/MtrB. Probably functions as a membrane-associated protein kinase that phosphorylates MtrA in response to environmental signals. Autophosphorylates and transfers phosphate to MtrA in vitro. Overexpression of MtrA alone decreases bacterial virulence in mouse infection; co-expression of MtrA and MtrB restores normal bacterial growth, suggesting that bacterial growth in macrophages requires an optimal ratio of MtrB to MtrA. Probably plays a role in cell division. The chain is Sensor histidine kinase MtrB (mtrB) from Mycobacterium tuberculosis (strain ATCC 25618 / H37Rv).